The primary structure comprises 329 residues: Aspartate carbamoyltransferase catalytic subunit (329 aa).

Arg-63 and Thr-64 together coordinate carbamoyl phosphate. Residue Lys-91 coordinates L-aspartate. Positions 113, 141, and 144 each coordinate carbamoyl phosphate. Arg-179 and Arg-234 together coordinate L-aspartate. Residues Gly-275 and Pro-276 each contribute to the carbamoyl phosphate site.

This sequence belongs to the aspartate/ornithine carbamoyltransferase superfamily. ATCase family. Heterododecamer (2C3:3R2) of six catalytic PyrB chains organized as two trimers (C3), and six regulatory PyrI chains organized as three dimers (R2).

The catalysed reaction is carbamoyl phosphate + L-aspartate = N-carbamoyl-L-aspartate + phosphate + H(+). Its pathway is pyrimidine metabolism; UMP biosynthesis via de novo pathway; (S)-dihydroorotate from bicarbonate: step 2/3. Functionally, catalyzes the condensation of carbamoyl phosphate and aspartate to form carbamoyl aspartate and inorganic phosphate, the committed step in the de novo pyrimidine nucleotide biosynthesis pathway. This chain is Aspartate carbamoyltransferase catalytic subunit, found in Magnetococcus marinus (strain ATCC BAA-1437 / JCM 17883 / MC-1).